The sequence spans 146 residues: MRALQFLLRVSPAFLLLVLCLQLEINKAEESIWKVIQMDLQMPTVAVANEEVTVKLGIQTELKECMVIKAYLRSNIQIDGPFNYRYTSCLCDDYPRTFYWDLVANRTATIAAVVDIIRELDICPEDRAVVPIKSNRYYVLHRLNVS.

A signal peptide spans 1–28; the sequence is MRALQFLLRVSPAFLLLVLCLQLEINKA. Cystine bridges form between Cys-65–Cys-91 and Cys-89–Cys-123. N-linked (GlcNAc...) asparagine glycosylation occurs at Asn-105.

Belongs to the PIP family. Monomer. Interacts with AZGP1.

It is found in the secreted. In Oryctolagus cuniculus (Rabbit), this protein is Prolactin-inducible protein homolog (PIP).